The primary structure comprises 880 residues: Valine--tRNA ligase (880 aa).

Residues 49–59 (PNVTGKLHLGH) carry the 'HIGH' region motif. The short motif at 525 to 529 (KMSKS) is the 'KMSKS' region element. Residue Lys-528 coordinates ATP. A coiled-coil region spans residues 809–880 (LEGLINIEEE…VKARLAELKR (72 aa)).

It belongs to the class-I aminoacyl-tRNA synthetase family. ValS type 1 subfamily. As to quaternary structure, monomer.

Its subcellular location is the cytoplasm. It carries out the reaction tRNA(Val) + L-valine + ATP = L-valyl-tRNA(Val) + AMP + diphosphate. Functionally, catalyzes the attachment of valine to tRNA(Val). As ValRS can inadvertently accommodate and process structurally similar amino acids such as threonine, to avoid such errors, it has a 'posttransfer' editing activity that hydrolyzes mischarged Thr-tRNA(Val) in a tRNA-dependent manner. This is Valine--tRNA ligase (valS) from Geobacillus stearothermophilus (Bacillus stearothermophilus).